A 444-amino-acid polypeptide reads, in one-letter code: Argininosuccinate synthase (444 aa).

ATP is bound by residues 18–26 (AFSGGLDTS) and alanine 44. Tyrosine 100 serves as a coordination point for L-citrulline. Positions 130 and 132 each coordinate ATP. L-aspartate contacts are provided by threonine 132, asparagine 136, and aspartate 137. Asparagine 136 contacts L-citrulline. Residue aspartate 137 participates in ATP binding. L-citrulline is bound by residues arginine 140 and serine 193. Position 195 (aspartate 195) interacts with ATP. L-citrulline is bound by residues threonine 202, glutamate 204, and glutamate 281.

Belongs to the argininosuccinate synthase family. Type 2 subfamily. Homotetramer.

It is found in the cytoplasm. The enzyme catalyses L-citrulline + L-aspartate + ATP = 2-(N(omega)-L-arginino)succinate + AMP + diphosphate + H(+). It functions in the pathway amino-acid biosynthesis; L-arginine biosynthesis; L-arginine from L-ornithine and carbamoyl phosphate: step 2/3. The polypeptide is Argininosuccinate synthase (Actinobacillus succinogenes (strain ATCC 55618 / DSM 22257 / CCUG 43843 / 130Z)).